The sequence spans 399 residues: Mycinamicin VI 2''-O-methyltransferase (399 aa).

S-adenosyl-L-methionine is bound by residues T173, 202–208 (EIGVGGY), S217, D234, 252–253 (DQ), and D275. D275 contacts Mg(2+). The Proton acceptor role is filled by H278. The Mg(2+) site is built by E303 and D304.

Belongs to the methyltransferase OleY/MycE family. In terms of assembly, homotetramer. It depends on Mg(2+) as a cofactor.

It carries out the reaction mycinamicin VI + S-adenosyl-L-methionine = mycinamicin III + S-adenosyl-L-homocysteine + H(+). It participates in antibiotic biosynthesis; mycinamicin biosynthesis. O-methyltransferase that catalyzes the conversion of mycinamicin VI to mycinamicin III in the biosynthesis of mycinamicin, a 16-membered macrolide antibiotic. The protein is Mycinamicin VI 2''-O-methyltransferase (mycE) of Micromonospora griseorubida.